Consider the following 385-residue polypeptide: UPF0744 protein YSC83 (385 aa).

Belongs to the UPF0744 family.

Its subcellular location is the mitochondrion outer membrane. This Saccharomyces cerevisiae (strain ATCC 204508 / S288c) (Baker's yeast) protein is UPF0744 protein YSC83 (YSC83).